The primary structure comprises 158 residues: Fluoride-specific ion channel FluC 2 (158 aa).

A run of 4 helical transmembrane segments spans residues 25 to 45, 63 to 83, 95 to 115, and 126 to 146; these read AWHGQAPVVAVVALGGGIGGT, WTTFWVNVVGCAVIGVFMVVI, PFFGTGVLGGFTTFSTYAVDI, and TALAYLAATLLAALAAVRLAA. Na(+) contacts are provided by G103 and T106.

Belongs to the fluoride channel Fluc/FEX (TC 1.A.43) family.

It localises to the cell membrane. It catalyses the reaction fluoride(in) = fluoride(out). Na(+) is not transported, but it plays an essential structural role and its presence is essential for fluoride channel function. Functionally, fluoride-specific ion channel. Important for reducing fluoride concentration in the cell, thus reducing its toxicity. In Streptomyces avermitilis (strain ATCC 31267 / DSM 46492 / JCM 5070 / NBRC 14893 / NCIMB 12804 / NRRL 8165 / MA-4680), this protein is Fluoride-specific ion channel FluC 2.